The sequence spans 591 residues: Aspartate--tRNA(Asp/Asn) ligase (591 aa).

An L-aspartate-binding site is contributed by E174. The interval 198 to 201 (QLFK) is aspartate. R220 is a binding site for L-aspartate. Residues 220-222 (RDE) and Q229 each bind ATP. L-aspartate is bound at residue H450. E483 contacts ATP. R490 serves as a coordination point for L-aspartate. 535–538 (GLDR) serves as a coordination point for ATP.

This sequence belongs to the class-II aminoacyl-tRNA synthetase family. Type 1 subfamily. In terms of assembly, homodimer.

It localises to the cytoplasm. The enzyme catalyses tRNA(Asx) + L-aspartate + ATP = L-aspartyl-tRNA(Asx) + AMP + diphosphate. In terms of biological role, aspartyl-tRNA synthetase with relaxed tRNA specificity since it is able to aspartylate not only its cognate tRNA(Asp) but also tRNA(Asn). Reaction proceeds in two steps: L-aspartate is first activated by ATP to form Asp-AMP and then transferred to the acceptor end of tRNA(Asp/Asn). This is Aspartate--tRNA(Asp/Asn) ligase from Pseudomonas aeruginosa (strain LESB58).